Here is a 227-residue protein sequence, read N- to C-terminus: Nucleoside triphosphate pyrophosphatase (227 aa).

D77 functions as the Proton acceptor in the catalytic mechanism.

Belongs to the Maf family. Requires a divalent metal cation as cofactor.

It localises to the cytoplasm. It carries out the reaction a ribonucleoside 5'-triphosphate + H2O = a ribonucleoside 5'-phosphate + diphosphate + H(+). It catalyses the reaction a 2'-deoxyribonucleoside 5'-triphosphate + H2O = a 2'-deoxyribonucleoside 5'-phosphate + diphosphate + H(+). In terms of biological role, nucleoside triphosphate pyrophosphatase. May have a dual role in cell division arrest and in preventing the incorporation of modified nucleotides into cellular nucleic acids. This is Nucleoside triphosphate pyrophosphatase from Rickettsia typhi (strain ATCC VR-144 / Wilmington).